The sequence spans 180 residues: Large ribosomal subunit protein uL5 (180 aa).

This sequence belongs to the universal ribosomal protein uL5 family. In terms of assembly, part of the 50S ribosomal subunit; part of the 5S rRNA/L5/L18/L25 subcomplex. Contacts the 5S rRNA and the P site tRNA. Forms a bridge to the 30S subunit in the 70S ribosome.

This is one of the proteins that bind and probably mediate the attachment of the 5S RNA into the large ribosomal subunit, where it forms part of the central protuberance. In the 70S ribosome it contacts protein S13 of the 30S subunit (bridge B1b), connecting the 2 subunits; this bridge is implicated in subunit movement. Contacts the P site tRNA; the 5S rRNA and some of its associated proteins might help stabilize positioning of ribosome-bound tRNAs. This is Large ribosomal subunit protein uL5 from Leuconostoc citreum (strain KM20).